The primary structure comprises 130 residues: Protein CPn_0713/CP_0033/CPj0713/CpB0740 (130 aa).

This sequence belongs to the chlamydial CPn_0713/CT_663/TC_0034 family.

The chain is Protein CPn_0713/CP_0033/CPj0713/CpB0740 from Chlamydia pneumoniae (Chlamydophila pneumoniae).